We begin with the raw amino-acid sequence, 356 residues long: Heat-inducible transcription repressor HrcA (356 aa).

This sequence belongs to the HrcA family.

Functionally, negative regulator of class I heat shock genes (grpE-dnaK-dnaJ and groELS operons). Prevents heat-shock induction of these operons. This Chelativorans sp. (strain BNC1) protein is Heat-inducible transcription repressor HrcA.